We begin with the raw amino-acid sequence, 194 residues long: Protein GrpE 2 (194 aa).

The segment covering 1–17 has biased composition (basic and acidic residues); sequence MNDIDKHKKETQTESKN. The tract at residues 1–29 is disordered; that stretch reads MNDIDKHKKETQTESKNDLNNTTITQNNV. A compositionally biased stretch (polar residues) spans 18 to 29; it reads DLNNTTITQNNV.

Belongs to the GrpE family. As to quaternary structure, homodimer.

The protein localises to the cytoplasm. Its function is as follows. Participates actively in the response to hyperosmotic and heat shock by preventing the aggregation of stress-denatured proteins, in association with DnaK and GrpE. It is the nucleotide exchange factor for DnaK and may function as a thermosensor. Unfolded proteins bind initially to DnaJ; upon interaction with the DnaJ-bound protein, DnaK hydrolyzes its bound ATP, resulting in the formation of a stable complex. GrpE releases ADP from DnaK; ATP binding to DnaK triggers the release of the substrate protein, thus completing the reaction cycle. Several rounds of ATP-dependent interactions between DnaJ, DnaK and GrpE are required for fully efficient folding. The protein is Protein GrpE 2 of Buchnera aphidicola subsp. Baizongia pistaciae (strain Bp).